Here is a 431-residue protein sequence, read N- to C-terminus: Histidine--tRNA ligase (431 aa).

The segment at 1–20 is disordered; sequence MALQRPKGTQDHLPDGSPKL.

It belongs to the class-II aminoacyl-tRNA synthetase family. As to quaternary structure, homodimer.

Its subcellular location is the cytoplasm. It catalyses the reaction tRNA(His) + L-histidine + ATP = L-histidyl-tRNA(His) + AMP + diphosphate + H(+). The protein is Histidine--tRNA ligase of Deinococcus geothermalis (strain DSM 11300 / CIP 105573 / AG-3a).